We begin with the raw amino-acid sequence, 147 residues long: UPF0251 protein CTC_01373 (147 aa).

It belongs to the UPF0251 family.

The sequence is that of UPF0251 protein CTC_01373 from Clostridium tetani (strain Massachusetts / E88).